We begin with the raw amino-acid sequence, 210 residues long: Outer-membrane lipoprotein carrier protein (210 aa).

Positions 1-23 (MLMFSRFRYIFFAVALLSGPVCA) are cleaved as a signal peptide.

Belongs to the LolA family. As to quaternary structure, monomer.

The protein localises to the periplasm. Functionally, participates in the translocation of lipoproteins from the inner membrane to the outer membrane. Only forms a complex with a lipoprotein if the residue after the N-terminal Cys is not an aspartate (The Asp acts as a targeting signal to indicate that the lipoprotein should stay in the inner membrane). The sequence is that of Outer-membrane lipoprotein carrier protein from Xylella fastidiosa (strain Temecula1 / ATCC 700964).